A 570-amino-acid chain; its full sequence is Putative ABC transporter ATP-binding protein MW2603 (570 aa).

2 consecutive ABC transporter domains span residues 6–247 (ISFK…GIRE) and 304–537 (LELN…ASLR). ATP is bound by residues 40–47 (GASGSGKS) and 338–345 (GHNGAGKS).

Belongs to the ABC transporter superfamily.

The protein localises to the cell membrane. In terms of biological role, probably part of an ABC transporter complex. Responsible for energy coupling to the transport system. The chain is Putative ABC transporter ATP-binding protein MW2603 from Staphylococcus aureus (strain MW2).